A 205-amino-acid chain; its full sequence is Allergen Asp f 15 homolog (205 aa).

This sequence belongs to the cerato-platanin family.

Its subcellular location is the secreted. In Arthroderma benhamiae (strain ATCC MYA-4681 / CBS 112371) (Trichophyton mentagrophytes), this protein is Allergen Asp f 15 homolog.